The sequence spans 270 residues: 3-phenylpropionate-dihydrodiol/cinnamic acid-dihydrodiol dehydrogenase (270 aa).

NAD(+) is bound at residue Phe10–Ala34. A substrate-binding site is contributed by Ser143. Tyr156 functions as the Proton acceptor in the catalytic mechanism.

Belongs to the short-chain dehydrogenases/reductases (SDR) family.

It carries out the reaction 3-(cis-5,6-dihydroxycyclohexa-1,3-dien-1-yl)propanoate + NAD(+) = 3-(2,3-dihydroxyphenyl)propanoate + NADH + H(+). The enzyme catalyses (2E)-3-(cis-5,6-dihydroxycyclohexa-1,3-dien-1-yl)prop-2-enoate + NAD(+) = (2E)-3-(2,3-dihydroxyphenyl)prop-2-enoate + NADH + H(+). It functions in the pathway aromatic compound metabolism; 3-phenylpropanoate degradation. Its function is as follows. Converts 3-phenylpropionate-dihydrodiol (PP-dihydrodiol) and cinnamic acid-dihydrodiol (CI-dihydrodiol) into 3-(2,3-dihydroxylphenyl)propanoic acid (DHPP) and 2,3-dihydroxicinnamic acid (DHCI), respectively. The polypeptide is 3-phenylpropionate-dihydrodiol/cinnamic acid-dihydrodiol dehydrogenase (Escherichia coli O8 (strain IAI1)).